We begin with the raw amino-acid sequence, 556 residues long: Formate--tetrahydrofolate ligase (556 aa).

65-72 provides a ligand contact to ATP; sequence TPAGEGKT.

The protein belongs to the formate--tetrahydrofolate ligase family.

The catalysed reaction is (6S)-5,6,7,8-tetrahydrofolate + formate + ATP = (6R)-10-formyltetrahydrofolate + ADP + phosphate. It participates in one-carbon metabolism; tetrahydrofolate interconversion. The polypeptide is Formate--tetrahydrofolate ligase (Proteus mirabilis (strain HI4320)).